A 44-amino-acid chain; its full sequence is Photosystem I reaction center subunit IX (44 aa).

The helical transmembrane segment at 7-27 (YLSVAPVLSTLWFGALAGLLI) threads the bilayer.

It belongs to the PsaJ family.

The protein localises to the plastid. The protein resides in the chloroplast thylakoid membrane. Its function is as follows. May help in the organization of the PsaE and PsaF subunits. This chain is Photosystem I reaction center subunit IX, found in Solanum bulbocastanum (Wild potato).